The primary structure comprises 74 residues: Consomatin Gh1 (74 aa).

A signal peptide spans 1–22 (MQTACWVMVMMMVWITAPLSEG). Residues 23–57 (GKLNDVIRGLVPDDVTPQLILRSLFFHRPSDSVVR) constitute a propeptide that is removed on maturation. Cys-65 and Cys-70 are oxidised to a cystine. A D-tryptophan modification is found at Trp-67. 4-hydroxyproline occurs at positions 71, 72, and 74.

The protein belongs to the conotoxin C superfamily. Consomatin family. Expressed by the venom duct.

Its subcellular location is the secreted. In terms of biological role, moderately activates human somatostatin receptors (SSTR) with a preferential activation of SSTR1 and SSTR4. In vivo, does not cause behavioral changes in mice within a few minutes of intracranial injection, but causes a progressive loss of movement thereafter. Four to five hours after injection, mice recover, even with the highest dose tested. Shows antinociception and antihyperalgesia activities in two mouse models of acute pain, most probably by acting outside the central nervous system. This chain is Consomatin Gh1, found in Conus grahami (Cone snail).